A 110-amino-acid polypeptide reads, in one-letter code: MTQGVEFNRLMMDMRAMKAEAMSTPKTTAAPELAPGQSSFADMLGQAIGKVHETQQASSQLANAFEIGKSGVDLTDVMIASQKASVSFQALTQVRNKLVQAYQDIMQMPV.

This sequence belongs to the FliE family.

Its subcellular location is the bacterial flagellum basal body. The sequence is that of Flagellar hook-basal body complex protein FliE from Pseudomonas entomophila (strain L48).